The chain runs to 510 residues: 2,3-bisphosphoglycerate-independent phosphoglycerate mutase (510 aa).

Mn(2+)-binding residues include Asp12 and Ser62. The Phosphoserine intermediate role is filled by Ser62. Substrate contacts are provided by residues His121, 151–152, Arg183, Arg189, 258–261, and Lys331; these read RD and RPDR. Mn(2+) contacts are provided by Asp398, His402, Asp439, His440, and His458.

This sequence belongs to the BPG-independent phosphoglycerate mutase family. Monomer. It depends on Mn(2+) as a cofactor.

It catalyses the reaction (2R)-2-phosphoglycerate = (2R)-3-phosphoglycerate. It participates in carbohydrate degradation; glycolysis; pyruvate from D-glyceraldehyde 3-phosphate: step 3/5. In terms of biological role, catalyzes the interconversion of 2-phosphoglycerate and 3-phosphoglycerate. This Clostridioides difficile (strain 630) (Peptoclostridium difficile) protein is 2,3-bisphosphoglycerate-independent phosphoglycerate mutase.